A 599-amino-acid polypeptide reads, in one-letter code: Elongation factor 4 (599 aa).

The tr-type G domain maps to 5-187 (SHIRNFSIIA…ELVRLVPPPT (183 aa)). GTP contacts are provided by residues 17 to 22 (DHGKST) and 134 to 137 (NKMD).

Belongs to the TRAFAC class translation factor GTPase superfamily. Classic translation factor GTPase family. LepA subfamily.

It is found in the cell inner membrane. It carries out the reaction GTP + H2O = GDP + phosphate + H(+). Required for accurate and efficient protein synthesis under certain stress conditions. May act as a fidelity factor of the translation reaction, by catalyzing a one-codon backward translocation of tRNAs on improperly translocated ribosomes. Back-translocation proceeds from a post-translocation (POST) complex to a pre-translocation (PRE) complex, thus giving elongation factor G a second chance to translocate the tRNAs correctly. Binds to ribosomes in a GTP-dependent manner. The protein is Elongation factor 4 of Cellvibrio japonicus (strain Ueda107) (Pseudomonas fluorescens subsp. cellulosa).